Consider the following 566-residue polypeptide: Arginine--tRNA ligase (566 aa).

The 'HIGH' region motif lies at 124 to 134; it reads ANPNGPLHIGH.

It belongs to the class-I aminoacyl-tRNA synthetase family.

It localises to the cytoplasm. It carries out the reaction tRNA(Arg) + L-arginine + ATP = L-arginyl-tRNA(Arg) + AMP + diphosphate. This Methanocaldococcus jannaschii (strain ATCC 43067 / DSM 2661 / JAL-1 / JCM 10045 / NBRC 100440) (Methanococcus jannaschii) protein is Arginine--tRNA ligase (argS).